We begin with the raw amino-acid sequence, 222 residues long: Small ribosomal subunit protein uS3 (222 aa).

The region spanning 39-109 (IRNFVKKKVY…NILINIVEVK (71 aa)) is the KH type-2 domain.

Belongs to the universal ribosomal protein uS3 family. Part of the 30S ribosomal subunit. Forms a tight complex with proteins S10 and S14.

Binds the lower part of the 30S subunit head. Binds mRNA in the 70S ribosome, positioning it for translation. This is Small ribosomal subunit protein uS3 from Clostridium tetani (strain Massachusetts / E88).